We begin with the raw amino-acid sequence, 181 residues long: Adenylate kinase (181 aa).

Gly10–Thr15 is a binding site for ATP. Positions Ser30–Val59 are NMP. Residues Thr31, Arg36, Asp57–Val59, Gly85–Arg88, and Gln92 contribute to the AMP site. An LID region spans residues Gly126–Asp132. An ATP-binding site is contributed by Arg127. 2 residues coordinate AMP: Arg129 and Arg140. Gly166 contributes to the ATP binding site.

This sequence belongs to the adenylate kinase family. As to quaternary structure, monomer.

The protein resides in the cytoplasm. The enzyme catalyses AMP + ATP = 2 ADP. It participates in purine metabolism; AMP biosynthesis via salvage pathway; AMP from ADP: step 1/1. Its function is as follows. Catalyzes the reversible transfer of the terminal phosphate group between ATP and AMP. Plays an important role in cellular energy homeostasis and in adenine nucleotide metabolism. This is Adenylate kinase from Mycobacterium sp. (strain MCS).